A 930-amino-acid polypeptide reads, in one-letter code: Translation initiation factor IF-2 (930 aa).

Residues 50–67 are compositionally biased toward low complexity; the sequence is FKPAAAPKVEAKPAAPKV. Disordered stretches follow at residues 50–217 and 260–346; these read FKPA…SSEE and EVVP…HELP. 2 stretches are compositionally biased toward basic and acidic residues: residues 68-90 and 110-125; these read SAEKKAEKSEPAKPAVAKEEAKP and FKAEREARAKEQAERR. Residues 129 to 141 show a composition bias toward low complexity; the sequence is KGNNRDQQQNGNR. Composition is skewed to basic and acidic residues over residues 157-167 and 262-295; these read RDNRRFNDQAK and VPEKKEPAVDTRRKKQARPDKNRDDYDHEEDGPR. The segment covering 309–318 has biased composition (low complexity); that stretch reads NQKNSNWNNN. Over residues 337–346 the composition is skewed to basic and acidic residues; sequence VTERKFHELP. The tr-type G domain occupies 432 to 599; that stretch reads ERPPVVTIMG…TVLLVAEIQE (168 aa). The tract at residues 441–448 is G1; it reads GHVDHGKT. 441–448 contacts GTP; it reads GHVDHGKT. Positions 466–470 are G2; that stretch reads GITQH. The interval 487-490 is G3; the sequence is DTPG. Residues 487 to 491 and 541 to 544 contribute to the GTP site; these read DTPGH and NKID. The G4 stretch occupies residues 541–544; that stretch reads NKID. Residues 577 to 579 are G5; the sequence is SAK.

The protein belongs to the TRAFAC class translation factor GTPase superfamily. Classic translation factor GTPase family. IF-2 subfamily.

Its subcellular location is the cytoplasm. Its function is as follows. One of the essential components for the initiation of protein synthesis. Protects formylmethionyl-tRNA from spontaneous hydrolysis and promotes its binding to the 30S ribosomal subunits. Also involved in the hydrolysis of GTP during the formation of the 70S ribosomal complex. This is Translation initiation factor IF-2 from Streptococcus pneumoniae (strain CGSP14).